A 225-amino-acid chain; its full sequence is RNA chaperone ProQ (225 aa).

Residues 103 to 173 form a disordered region; it reads LEEAKARVQT…APREERHTPV (71 aa). Residues 109 to 118 show a composition bias toward low complexity; the sequence is RVQTQRAAQQ. Over residues 137-146 the composition is skewed to basic residues; sequence RERKPRPQQP. Over residues 147–156 the composition is skewed to basic and acidic residues; the sequence is RRKEGAEQRK.

This sequence belongs to the ProQ family.

The protein resides in the cytoplasm. RNA chaperone with significant RNA binding, RNA strand exchange and RNA duplexing activities. May regulate ProP activity through an RNA-based, post-transcriptional mechanism. The protein is RNA chaperone ProQ of Klebsiella pneumoniae (strain 342).